Consider the following 478-residue polypeptide: Deoxyribodipyrimidine photo-lyase (478 aa).

In terms of domain architecture, Photolyase/cryptochrome alpha/beta spans 2-136 (NVNLMWFRND…IINCFHDSVL (135 aa)). Position 110 (Glu-110) interacts with (6R)-5,10-methylene-5,6,7,8-tetrahydrofolate. FAD contacts are provided by residues Tyr-227 and 239–243 (TSMLS). Interaction with DNA regions lie at residues 279–286 (ELLWREFY) and 346–347 (NR). An FAD-binding site is contributed by 377–379 (DGD). A DNA-binding site is contributed by Gln-409.

It belongs to the DNA photolyase class-1 family. Monomer. The cofactor is FAD. Requires (6R)-5,10-methylene-5,6,7,8-tetrahydrofolate as cofactor.

The enzyme catalyses cyclobutadipyrimidine (in DNA) = 2 pyrimidine residues (in DNA).. In terms of biological role, involved in repair of UV radiation-induced DNA damage. Catalyzes the light-dependent monomerization (300-600 nm) of cyclobutyl pyrimidine dimers (in cis-syn configuration), which are formed between adjacent bases on the same DNA strand upon exposure to ultraviolet radiation. The polypeptide is Deoxyribodipyrimidine photo-lyase (phrB) (Buchnera aphidicola subsp. Baizongia pistaciae (strain Bp)).